Reading from the N-terminus, the 793-residue chain is MVIQTATTLSPAKARPSFPHNDLIKSMSDSLISRPTHPPIRKLKSSLKISHPEPISRSKSEIFCTSPEKNVRFAIELTTVKRFDKNAEPSSISNENSPTLSPVDSNTAADDVQLFNNEDCWFNDSSLVTNLLKNEKKFRYMNSLNNMFKLDLYDSEDEDDIDEHINSQAEYGYTYNSLSTRGKTSENKSATSSLATQATNICDWKLHCTDLVPFKIAPPLFTKTLSASDLQGQLTKYLNGQNVKLHSLTQLGDDSSKITGLVYVKNLSFEKYLEIKFTFNSWRDIHYVTANFNRTINSNVDEFKFTIDLNSLKYILLIKRIITMEKNTSSCPLNIELCCRYDVNNETYYDNNNGKNYHLFMTTFKKGGETKEKIPVVVEPASQTDAAMSPKEMKARFVSSNPTLSRFLPQSRKFSEDTDYYNTSPLKHLYHNDTTSWVKPKRLNVVLDKLENATPPPPSSALANDTARTGKITKDKNNVLAPPTASNSIDLPILGSQHQSLYSGSSSYSSSSSSISSSLSFASSNNSSTNSSSASCSFPLTELDNFDYANLYEPNDTFTTANLFNHSLNSLMPEISTPSFFGGFRNENTINNNDSKNLVTSLEDSYEDKQSVITDTTMDENNKTSTINNSTDTLIKPSKENGTVKENKSSANSTSAPSSSQNRASTILNDHSNGKSDLKYVNYQSLLDSHCFYNHPSSPNLQSTSFSSAAPFSGISQASDIFDYENEDSDSNQIAGEIDNNSFPPHFYLDEDDKSACLSDDALIDHHRNTNPFINTFSSSPPILSQEVDRWRL.

Residues methionine 1–serine 10 are compositionally biased toward polar residues. A disordered region spans residues methionine 1–histidine 20. The 126-residue stretch at threonine 235–phenylalanine 360 folds into the CBM21 domain. Phosphoserine is present on residues serine 415 and serine 424. 2 disordered regions span residues leucine 450–leucine 491 and threonine 616–histidine 671. Residues lysine 623–threonine 633 show a composition bias toward polar residues. The segment covering proline 637–lysine 648 has biased composition (basic and acidic residues). Residues serine 649 to serine 665 show a composition bias toward low complexity.

Regulates the activity of glycogen synthase. It is most probably a regulatory subunit for protein phosphatase type 1. The polypeptide is Serine/threonine-protein phosphatase 1 regulatory subunit GAC1 (GAC1) (Saccharomyces cerevisiae (strain ATCC 204508 / S288c) (Baker's yeast)).